Consider the following 410-residue polypeptide: Proteasomal ubiquitin receptor ADRM1 (410 aa).

Positions 17–130 (SSSKYLVEFR…RKVNEYLNNP (114 aa)) constitute a Pru domain. A Phosphoserine modification is found at serine 18. Low complexity predominate over residues 191-257 (GSGGPATSSS…PAAQTPSLPA (67 aa)). 2 disordered regions span residues 191-264 (GSGG…SSTQ) and 381-410 (FAKA…MSLD). The DEUBAD domain maps to 281–395 (PAMPTEGSGV…EGSDSKTDDG (115 aa)). The span at 381–401 (FAKAMEGSDSKTDDGDSKDKK) shows a compositional bias: basic and acidic residues.

Belongs to the ADRM1 family. In terms of assembly, component of the 19S proteasome regulatory particle complex. The 26S proteasome consists of a 20S core particle (CP) and two 19S regulatory subunits (RP).

It is found in the cytoplasm. It localises to the nucleus. Its function is as follows. Component of the 26S proteasome, a multiprotein complex involved in the ATP-dependent degradation of ubiquitinated proteins. This complex plays a key role in the maintenance of protein homeostasis by removing misfolded or damaged proteins, which could impair cellular functions, and by removing proteins whose functions are no longer required. Therefore, the proteasome participates in numerous cellular processes, including cell cycle progression, apoptosis, or DNA damage repair. Within the complex, functions as a proteasomal ubiquitin receptor. The sequence is that of Proteasomal ubiquitin receptor ADRM1 (adrm1b) from Danio rerio (Zebrafish).